Here is a 373-residue protein sequence, read N- to C-terminus: MKALHFGAGNIGRGFIGSLLKTSGFELVFTDVNEAVINELNARGEYTVELAAPGQKQEIVGPVTAINSAQDPAALTEAVASADLITTAVGPAVLKIIASSIAEGLKQKNPDHIINIVACENMIGGSSHLKEAVFSHLTEEEQKALSQTVGFPNAAVDRIVPIQHHEDILKVSVEPFFEWVIDETGFIGDVPQIDGATFVQDLTPYIERKLFTVNTGHALAAYVGYQQGVQTIKEAVDTPEIRQVVEGALHETGSYLIDTYGFKKEEHDAYIQKIIKRFENVFISDEVTRVARSPLRKLGADDRLIGPAKKMKQPVYLIKGIAAALAYDFAEDEEAVRLQKLRKEKGIEGVLEEVCGLTPTDDLYQAILKETTR.

3–14 (ALHFGAGNIGRG) contributes to the NAD(+) binding site.

The protein belongs to the mannitol dehydrogenase family.

It catalyses the reaction D-mannitol 1-phosphate + NAD(+) = beta-D-fructose 6-phosphate + NADH + H(+). This Bacillus pumilus (strain SAFR-032) protein is Mannitol-1-phosphate 5-dehydrogenase.